A 688-amino-acid polypeptide reads, in one-letter code: Ethylmalonyl-CoA mutase (688 aa).

Residues 530 to 659 (TPRLVVGKPG…VGLAKVVERA (130 aa)) form the B12-binding domain. An adenosylcob(III)alamin-binding site is contributed by histidine 543. Residues 666–688 (DRADTEAGVPGAPKRNESGAQVF) form a disordered region.

It belongs to the methylmalonyl-CoA mutase family. It depends on adenosylcob(III)alamin as a cofactor.

The enzyme catalyses (2R)-ethylmalonyl-CoA = (2S)-methylsuccinyl-CoA. In terms of biological role, radical enzyme that catalyzes the transformation of (2R)-ethylmalonyl-CoA to (2S)-methylsuccinyl-CoA. Is involved in the ethylmalonyl-CoA pathway for acetyl-CoA assimilation required for M.extorquens growth on one- and two-carbon compounds such as ethylamine, methanol or ethanol as sole carbon source. This enzyme acts as a regulatory metabolic control point in this pathway, that allows M.extorquens to efficiently restore metabolic balance when challenged with a sudden change in the growth substrate. The chain is Ethylmalonyl-CoA mutase from Methylorubrum extorquens (strain ATCC 14718 / DSM 1338 / JCM 2805 / NCIMB 9133 / AM1) (Methylobacterium extorquens).